A 117-amino-acid polypeptide reads, in one-letter code: Immunoglobulin heavy variable 1-69-2 (117 aa).

Positions 1-19 (MDCTWRILLLVAAATGTHA) are cleaved as a signal peptide. Residues 20 to 44 (EVQLVQSGAEVKKPGATVKISCKVS) are framework-1. Residues 20 to 117 (EVQLVQSGAE…EDTAVYYCAT (98 aa)) enclose the Ig-like domain. Cys-41 and Cys-115 are oxidised to a cystine. The segment at 45–52 (GYTFTDYY) is complementarity-determining-1. Positions 53-69 (MHWVQQAPGKGLEWMGL) are framework-2. The interval 70–77 (VDPEDGET) is complementarity-determining-2. Residues 78-115 (IYAEKFQGRVTITADTSTDTAYMELSSLRSEDTAVYYC) form a framework-3 region. A complementarity-determining-3 region spans residues 116–117 (AT).

As to quaternary structure, immunoglobulins are composed of two identical heavy chains and two identical light chains; disulfide-linked.

The protein localises to the secreted. Its subcellular location is the cell membrane. Its function is as follows. V region of the variable domain of immunoglobulin heavy chains that participates in the antigen recognition. Immunoglobulins, also known as antibodies, are membrane-bound or secreted glycoproteins produced by B lymphocytes. In the recognition phase of humoral immunity, the membrane-bound immunoglobulins serve as receptors which, upon binding of a specific antigen, trigger the clonal expansion and differentiation of B lymphocytes into immunoglobulins-secreting plasma cells. Secreted immunoglobulins mediate the effector phase of humoral immunity, which results in the elimination of bound antigens. The antigen binding site is formed by the variable domain of one heavy chain, together with that of its associated light chain. Thus, each immunoglobulin has two antigen binding sites with remarkable affinity for a particular antigen. The variable domains are assembled by a process called V-(D)-J rearrangement and can then be subjected to somatic hypermutations which, after exposure to antigen and selection, allow affinity maturation for a particular antigen. This Homo sapiens (Human) protein is Immunoglobulin heavy variable 1-69-2.